The chain runs to 334 residues: MKKTLIIAEAGVNHNGDLNLAKKLIEIAADSGADFVKFQSFKAKNCISTKAKKAPYQLKTTANDESQLQMVQKLELDLKAHKELILHAKKCNIAFLSTPFDLESVDLLNELGLKIFKIPSGEITNLPYLKKIAKLNKKIILSTGMANLGEIEEALNVLCKNGAKRQNITLLHCTTEYPAPFNEVNLKAMQSLKDAFKLDVGYSDHTRGIHISLAAVALGACVIEKHFTLDKNMSGPDHKASLEPQELKMLCTQIRQIQKAMGDGIKKASKSEQKNINIVRKSLVAKKDIKKGEIFSEGNLTTKRPANGISAMRYEEFLGKIATKNYKEDELIRE.

The 53-residue stretch at 282–334 folds into the AFP-like domain; the sequence is SLVAKKDIKKGEIFSEGNLTTKRPANGISAMRYEEFLGKIATKNYKEDELIRE.

It carries out the reaction 2,4-diacetamido-2,4,6-trideoxy-alpha-D-mannopyranose + phosphoenolpyruvate + H2O = N,N-diacetyllegionaminate + phosphate. Involved in biosynthesis of legionaminic acid (5,7-diamino-3,5,7,9-tetradeoxy-D-glycero-D-galacto-non-2-ulosonic acid)(Leg), a sialic acid-like derivative that is incorporated into flagellin via O-linkage to Ser/Thr. Catalyzes the condensation of 2,4-diacetamido-2,4,6-trideoxymannose with phosphoenolpyruvate (PEP) to give N,N'-diacetyllegionaminic acid. This chain is N,N'-diacetyllegionaminic acid synthase (legI), found in Campylobacter jejuni subsp. jejuni serotype O:2 (strain ATCC 700819 / NCTC 11168).